A 190-amino-acid polypeptide reads, in one-letter code: Holliday junction branch migration complex subunit RuvA (190 aa).

The interval 1 to 63 (MLDFIKGKVI…EESIEIYGFL (63 aa)) is domain I. The tract at residues 64-139 (ESSERDLFEE…ILPSLQYEKD (76 aa)) is domain II. A region of interest (flexible linker) is located at residue aspartate 139. Residues 139–190 (DQKYDDILSALLNLGYKRLEAKEVLDKIYNNEKDEATIIRESLSILAGKDGK) form a domain III region.

It belongs to the RuvA family. In terms of assembly, homotetramer. Forms an RuvA(8)-RuvB(12)-Holliday junction (HJ) complex. HJ DNA is sandwiched between 2 RuvA tetramers; dsDNA enters through RuvA and exits via RuvB. An RuvB hexamer assembles on each DNA strand where it exits the tetramer. Each RuvB hexamer is contacted by two RuvA subunits (via domain III) on 2 adjacent RuvB subunits; this complex drives branch migration. In the full resolvosome a probable DNA-RuvA(4)-RuvB(12)-RuvC(2) complex forms which resolves the HJ.

The protein localises to the cytoplasm. In terms of biological role, the RuvA-RuvB-RuvC complex processes Holliday junction (HJ) DNA during genetic recombination and DNA repair, while the RuvA-RuvB complex plays an important role in the rescue of blocked DNA replication forks via replication fork reversal (RFR). RuvA specifically binds to HJ cruciform DNA, conferring on it an open structure. The RuvB hexamer acts as an ATP-dependent pump, pulling dsDNA into and through the RuvAB complex. HJ branch migration allows RuvC to scan DNA until it finds its consensus sequence, where it cleaves and resolves the cruciform DNA. This chain is Holliday junction branch migration complex subunit RuvA, found in Thermodesulfovibrio yellowstonii (strain ATCC 51303 / DSM 11347 / YP87).